The following is a 306-amino-acid chain: Aspartate carbamoyltransferase catalytic subunit (306 aa).

R51 and T52 together coordinate carbamoyl phosphate. K79 contributes to the L-aspartate binding site. R101, H130, and Q133 together coordinate carbamoyl phosphate. Residues R163 and R215 each coordinate L-aspartate. G256 and P257 together coordinate carbamoyl phosphate.

Belongs to the aspartate/ornithine carbamoyltransferase superfamily. ATCase family. In terms of assembly, heterododecamer (2C3:3R2) of six catalytic PyrB chains organized as two trimers (C3), and six regulatory PyrI chains organized as three dimers (R2).

It carries out the reaction carbamoyl phosphate + L-aspartate = N-carbamoyl-L-aspartate + phosphate + H(+). Its pathway is pyrimidine metabolism; UMP biosynthesis via de novo pathway; (S)-dihydroorotate from bicarbonate: step 2/3. Functionally, catalyzes the condensation of carbamoyl phosphate and aspartate to form carbamoyl aspartate and inorganic phosphate, the committed step in the de novo pyrimidine nucleotide biosynthesis pathway. This chain is Aspartate carbamoyltransferase catalytic subunit, found in Ehrlichia ruminantium (strain Welgevonden).